The primary structure comprises 674 residues: tRNA wybutosine-synthesizing protein 4 (674 aa).

S-adenosyl-L-methionine contacts are provided by residues arginine 84, glycine 109, aspartate 140, 184–185 (DL), and glutamate 212.

It belongs to the methyltransferase superfamily. LCMT family.

The enzyme catalyses 7-[(3S)-3-amino-3-carboxypropyl]wyosine(37) in tRNA(Phe) + S-adenosyl-L-methionine = 7-[(3S)-(3-amino-3-methoxycarbonyl)propyl]wyosine(37) in tRNA(Phe) + S-adenosyl-L-homocysteine. The catalysed reaction is 7-[(3S)-(3-amino-3-methoxycarbonyl)propyl]wyosine(37) in tRNA(Phe) + S-adenosyl-L-methionine + CO2 = wybutosine(37) in tRNA(Phe) + S-adenosyl-L-homocysteine + 2 H(+). It functions in the pathway tRNA modification; wybutosine-tRNA(Phe) biosynthesis. Functionally, probable S-adenosyl-L-methionine-dependent methyltransferase that acts as a component of the wybutosine biosynthesis pathway. Wybutosine is a hyper modified guanosine with a tricyclic base found at the 3'-position adjacent to the anticodon of eukaryotic phenylalanine tRNA. May methylate the carboxyl group of leucine residues to form alpha-leucine ester residues. This is tRNA wybutosine-synthesizing protein 4 (PPM2) from Candida glabrata (strain ATCC 2001 / BCRC 20586 / JCM 3761 / NBRC 0622 / NRRL Y-65 / CBS 138) (Yeast).